Here is a 154-residue protein sequence, read N- to C-terminus: Myoglobin (154 aa).

Residues 2–148 enclose the Globin domain; it reads GLSDGEWQLV…FRNDIAAKYK (147 aa). A Phosphoserine modification is found at S4. H65 provides a ligand contact to nitrite. Residue H65 coordinates O2. T68 is modified (phosphothreonine). H94 provides a ligand contact to heme b.

Belongs to the globin family. Monomeric.

Its subcellular location is the cytoplasm. It localises to the sarcoplasm. The enzyme catalyses Fe(III)-heme b-[protein] + nitric oxide + H2O = Fe(II)-heme b-[protein] + nitrite + 2 H(+). It carries out the reaction H2O2 + AH2 = A + 2 H2O. In terms of biological role, monomeric heme protein which primary function is to store oxygen and facilitate its diffusion within muscle tissues. Reversibly binds oxygen through a pentacoordinated heme iron and enables its timely and efficient release as needed during periods of heightened demand. Depending on the oxidative conditions of tissues and cells, and in addition to its ability to bind oxygen, it also has a nitrite reductase activity whereby it regulates the production of bioactive nitric oxide. Under stress conditions, like hypoxia and anoxia, it also protects cells against reactive oxygen species thanks to its pseudoperoxidase activity. This is Myoglobin (MB) from Lagostomus maximus (Plains viscacha).